Reading from the N-terminus, the 283-residue chain is Octanoyl-[GcvH]:protein N-octanoyltransferase (283 aa).

The BPL/LPL catalytic domain maps to 42-248 (GQSDAVVRTW…TLQSFGGELY (207 aa)). The active-site Acyl-thioester intermediate is C147.

This sequence belongs to the octanoyltransferase LipL family.

It carries out the reaction N(6)-octanoyl-L-lysyl-[glycine-cleavage complex H protein] + L-lysyl-[lipoyl-carrier protein] = N(6)-octanoyl-L-lysyl-[lipoyl-carrier protein] + L-lysyl-[glycine-cleavage complex H protein]. It functions in the pathway protein modification; protein lipoylation via endogenous pathway; protein N(6)-(lipoyl)lysine from octanoyl-[acyl-carrier-protein]. In terms of biological role, catalyzes the amidotransfer (transamidation) of the octanoyl moiety from octanoyl-GcvH to the lipoyl domain of the E2 subunit of lipoate-dependent enzymes. In Geobacillus kaustophilus (strain HTA426), this protein is Octanoyl-[GcvH]:protein N-octanoyltransferase.